The primary structure comprises 662 residues: DNA helicase/primase complex-associated protein (662 aa).

The protein belongs to the herpesviridae HEPA family. Associates with the primase and the helicase to form the helicase-primase complex. Interacts with the origin-binding protein. Interacts with the polymerase catalytic subunit.

It localises to the host nucleus. Its function is as follows. Component of the helicase/primase complex. Unwinds the DNA at the replication forks and generates single-stranded DNA for both leading and lagging strand synthesis. The primase synthesizes short RNA primers on the lagging strand that the polymerase presumably elongates using dNTPs. The primase-associated factor has no known catalytic activity in the complex and may serve to facilitate the formation of the replisome by directly interacting with the origin-binding protein and the polymerase. The protein is DNA helicase/primase complex-associated protein (U74) of Human herpesvirus 6B (strain Z29) (HHV-6 variant B).